The following is a 1409-amino-acid chain: MAP kinase-activating death domain protein (1409 aa).

One can recognise a uDENN domain in the interval 26–230 (RGASQSSPDA…VPVPGKTKVQ (205 aa)). A cDENN domain is found at 251–390 (RFTLIDFPLH…DATHLKERLK (140 aa)). Positions 392–496 (AINKMTTMTV…ECCLCPKNET (105 aa)) constitute a dDENN domain. 4 disordered regions span residues 654 to 701 (SFDH…MKGL), 761 to 784 (QHIV…QSKN), 902 to 1008 (SSSA…KVKT), and 1015 to 1034 (PQNL…SFLA). Polar residues-rich tracts occupy residues 680–691 (SDASDTPTSRGS) and 761–772 (QHIVRSKTQPNP). Composition is skewed to low complexity over residues 773–784 (TSQQTANQQSKN) and 902–913 (SSSAPSTMTTPS). A compositionally biased stretch (basic and acidic residues) spans 915–925 (HSNDILKESRP). Polar residues predominate over residues 941–961 (LGQNVTPTSTNNHEIAQSTRS). The segment covering 963–1003 (ALPPPVPPREAPPIPKRNPPPLGAPPKVPEGARAPPPLPPR) has biased composition (pro residues). Positions 1020–1031 (PNNQPAQPSSPS) are enriched in low complexity. The Death domain maps to 1109-1184 (GMDQEPSEMI…GLVCSKEINK (76 aa)).

This sequence belongs to the MADD family. In terms of assembly, interacts with cab-1. As to expression, expressed in nearly all neurons.

Its subcellular location is the cell membrane. It localises to the cytoplasm. Guanyl-nucleotide exchange factor that regulates small GTPases. Converts GDP-bound inactive form of rab-3 and cab-1 to the GTP-bound active forms. Regulator of presynaptic activity that interacts with rab-3 to regulate synaptic vesicle release. Is also a regulator of the cab-1 synaptic transmission pathway. Probably by converting rab-3 to its GTP-bound active form, plays a role in the recruitment of endophilin unc-57 to synaptic vesicles. Probably by activating rab-3 and thus regulating the trafficking of dense-core vesicles, plays a role in AVG neuron-mediated formation of the right axon tract of the ventral nerve cord. Regulates anterior body muscle contractions (aBOC) and the expulsion steps during the defecation motor program (DMP). Probably by regulating DMP, required for fatty acid uptake by intestinal cells. In Caenorhabditis elegans, this protein is MAP kinase-activating death domain protein (aex-3).